Consider the following 436-residue polypeptide: [Pyruvate dehydrogenase (acetyl-transferring)] kinase isozyme 1, mitochondrial (436 aa).

A mitochondrion-targeting transit peptide spans 1-28 (MRLARLLRGAALAGPGPGLRAAGFSRSF). A Phosphotyrosine; by FGFR1 modification is found at Y136. The 231-residue stretch at 163–393 (YKESFGVDPV…DAVIYIKALS (231 aa)) folds into the Histidine kinase domain. Y243 is subject to Phosphotyrosine; by FGFR1, ABL1, FLT3 and JAK2. A Phosphotyrosine; by FGFR1 modification is found at Y244. ATP contacts are provided by residues 279 to 286 (ELFKNAMR), D318, 337 to 338 (ST), and 354 to 359 (GFGYGL). At T338 the chain carries Phosphothreonine. Position 405 is an N6-succinyllysine (K405).

Belongs to the PDK/BCKDK protein kinase family. As to quaternary structure, homodimer, and heterodimer with PDK2. Interacts with the pyruvate dehydrogenase complex subunit DLAT, and is part of the multimeric pyruvate dehydrogenase complex that contains multiple copies of pyruvate dehydrogenase (E1), dihydrolipoamide acetyltransferase (DLAT, E2) and lipoamide dehydrogenase (DLD, E3). Interacts with phosphoglycerate kinase PGK1; the interaction is direct, occurs under hypoxic conditions and leads to PDK1-mediated inhibition of pyruvate dehydrogenase complex activity. In terms of processing, phosphorylated by constitutively activated ABL1, FGFR1, FLT3 and JAK2 (in vitro), and this may also occur in cancer cells that express constitutively activated ABL1, FGFR1, FLT3 and JAK2. Phosphorylation at Tyr-243 and Tyr-244 strongly increases kinase activity, while phosphorylation at Tyr-136 has a lesser effect. Phosphorylated under hypoxic conditions at Thr-338 by phosphoglycerate kinase PGK1 which has an activating effect. As to expression, expressed predominantly in the heart. Detected at lower levels in liver, skeletal muscle and pancreas.

The protein localises to the mitochondrion matrix. The enzyme catalyses L-seryl-[pyruvate dehydrogenase E1 alpha subunit] + ATP = O-phospho-L-seryl-[pyruvate dehydrogenase E1 alpha subunit] + ADP + H(+). Activity is enhanced by binding to the pyruvate dehydrogenase subunit DLAT. Inhibited by AZD7545; this compound interferes with DLAT binding and thereby inhibits kinase activity. Inhibited by dichloroacetate and radicicol. Activated under hypoxic conditions by phosphoglycerate kinase PGK1-mediated phosphorylation at Thr-338. Kinase that plays a key role in regulation of glucose and fatty acid metabolism and homeostasis via phosphorylation of the pyruvate dehydrogenase subunits PDHA1 and PDHA2. This inhibits pyruvate dehydrogenase activity, and thereby regulates metabolite flux through the tricarboxylic acid cycle, down-regulates aerobic respiration and inhibits the formation of acetyl-coenzyme A from pyruvate. Plays an important role in cellular responses to hypoxia and is important for cell proliferation under hypoxia. The polypeptide is [Pyruvate dehydrogenase (acetyl-transferring)] kinase isozyme 1, mitochondrial (PDK1) (Homo sapiens (Human)).